The chain runs to 178 residues: Inorganic pyrophosphatase (178 aa).

3 residues coordinate substrate: lysine 30, arginine 44, and tyrosine 56. Residues aspartate 66, aspartate 71, and aspartate 103 each coordinate Mg(2+). Tyrosine 142 serves as a coordination point for substrate.

The protein belongs to the PPase family. Homohexamer. Requires Mg(2+) as cofactor.

The protein resides in the cytoplasm. It catalyses the reaction diphosphate + H2O = 2 phosphate + H(+). In terms of biological role, catalyzes the hydrolysis of inorganic pyrophosphate (PPi) forming two phosphate ions. This is Inorganic pyrophosphatase from Xanthomonas campestris pv. campestris (strain ATCC 33913 / DSM 3586 / NCPPB 528 / LMG 568 / P 25).